A 365-amino-acid polypeptide reads, in one-letter code: UDP-N-acetylglucosamine--N-acetylmuramyl-(pentapeptide) pyrophosphoryl-undecaprenol N-acetylglucosamine transferase (365 aa).

UDP-N-acetyl-alpha-D-glucosamine contacts are provided by residues 19–21 (TGG), N131, R170, S201, I255, 274–279 (ALTVTE), and Q300.

This sequence belongs to the glycosyltransferase 28 family. MurG subfamily.

It is found in the cell inner membrane. The enzyme catalyses di-trans,octa-cis-undecaprenyl diphospho-N-acetyl-alpha-D-muramoyl-L-alanyl-D-glutamyl-meso-2,6-diaminopimeloyl-D-alanyl-D-alanine + UDP-N-acetyl-alpha-D-glucosamine = di-trans,octa-cis-undecaprenyl diphospho-[N-acetyl-alpha-D-glucosaminyl-(1-&gt;4)]-N-acetyl-alpha-D-muramoyl-L-alanyl-D-glutamyl-meso-2,6-diaminopimeloyl-D-alanyl-D-alanine + UDP + H(+). It participates in cell wall biogenesis; peptidoglycan biosynthesis. Its function is as follows. Cell wall formation. Catalyzes the transfer of a GlcNAc subunit on undecaprenyl-pyrophosphoryl-MurNAc-pentapeptide (lipid intermediate I) to form undecaprenyl-pyrophosphoryl-MurNAc-(pentapeptide)GlcNAc (lipid intermediate II). The sequence is that of UDP-N-acetylglucosamine--N-acetylmuramyl-(pentapeptide) pyrophosphoryl-undecaprenol N-acetylglucosamine transferase from Acinetobacter baylyi (strain ATCC 33305 / BD413 / ADP1).